The sequence spans 171 residues: Adenine phosphoribosyltransferase (171 aa).

It belongs to the purine/pyrimidine phosphoribosyltransferase family. As to quaternary structure, homodimer.

Its subcellular location is the cytoplasm. The catalysed reaction is AMP + diphosphate = 5-phospho-alpha-D-ribose 1-diphosphate + adenine. It participates in purine metabolism; AMP biosynthesis via salvage pathway; AMP from adenine: step 1/1. Functionally, catalyzes a salvage reaction resulting in the formation of AMP, that is energically less costly than de novo synthesis. The polypeptide is Adenine phosphoribosyltransferase (Citrifermentans bemidjiense (strain ATCC BAA-1014 / DSM 16622 / JCM 12645 / Bem) (Geobacter bemidjiensis)).